A 169-amino-acid polypeptide reads, in one-letter code: Large ribosomal subunit protein bL17 (169 aa).

The segment at 124–169 (EKAVKRQDRSRRVKGSKKAIDEKTSDDSASVEAAPAAPEAEEKKDA) is disordered. Over residues 131 to 140 (DRSRRVKGSK) the composition is skewed to basic residues. Residues 150–161 (DSASVEAAPAAP) are compositionally biased toward low complexity.

The protein belongs to the bacterial ribosomal protein bL17 family. As to quaternary structure, part of the 50S ribosomal subunit. Contacts protein L32.

This Chloroherpeton thalassium (strain ATCC 35110 / GB-78) protein is Large ribosomal subunit protein bL17.